The chain runs to 176 residues: Small ribosomal subunit protein uS4 (176 aa).

The S4 RNA-binding domain occupies 103–165; the sequence is RRLQTIVYKK…PTSPYAKRRL (63 aa).

It belongs to the universal ribosomal protein uS4 family. In terms of assembly, part of the 30S ribosomal subunit. Contacts protein S5. The interaction surface between S4 and S5 is involved in control of translational fidelity.

Functionally, one of the primary rRNA binding proteins, it binds directly to 16S rRNA where it nucleates assembly of the body of the 30S subunit. In terms of biological role, with S5 and S12 plays an important role in translational accuracy. The protein is Small ribosomal subunit protein uS4 of Hyperthermus butylicus (strain DSM 5456 / JCM 9403 / PLM1-5).